We begin with the raw amino-acid sequence, 150 residues long: Large ribosomal subunit protein bL9 (150 aa).

This sequence belongs to the bacterial ribosomal protein bL9 family.

In terms of biological role, binds to the 23S rRNA. This Stenotrophomonas maltophilia (strain R551-3) protein is Large ribosomal subunit protein bL9.